The following is a 273-amino-acid chain: Putative phosphoenolpyruvate synthase regulatory protein (273 aa).

153–160 (AVSRAGKT) lines the ADP pocket.

Belongs to the pyruvate, phosphate/water dikinase regulatory protein family. PSRP subfamily.

It carries out the reaction [pyruvate, water dikinase] + ADP = [pyruvate, water dikinase]-phosphate + AMP + H(+). It catalyses the reaction [pyruvate, water dikinase]-phosphate + phosphate + H(+) = [pyruvate, water dikinase] + diphosphate. Functionally, bifunctional serine/threonine kinase and phosphorylase involved in the regulation of the phosphoenolpyruvate synthase (PEPS) by catalyzing its phosphorylation/dephosphorylation. This chain is Putative phosphoenolpyruvate synthase regulatory protein, found in Stenotrophomonas maltophilia (strain K279a).